Here is a 1217-residue protein sequence, read N- to C-terminus: Genetic suppressor element 1 (1217 aa).

The segment at 1–155 (MKGMSHEPKS…SRSSSGGRER (155 aa)) is disordered. A Phosphoserine modification is found at Ser10. Residues 15 to 33 (MLSTATRTTATVNPLTPSP) show a composition bias toward polar residues. 2 stretches are compositionally biased toward low complexity: residues 43 to 63 (SPAT…FAAA) and 76 to 89 (GSSL…VSSP). Phosphoserine occurs at positions 84 and 95. Over residues 103-114 (VPMGPIIVPPGG) the composition is skewed to low complexity. Arg305 is subject to Asymmetric dimethylarginine. Positions 321–403 (ERMSGLSAER…REKELLAAKA (83 aa)) form a coiled coil. Disordered stretches follow at residues 324 to 385 (SGLS…EREL) and 418 to 465 (RGHA…HHTV). Basic and acidic residues predominate over residues 331–385 (LQMDEELRREREREREREREREADREREKEREREREKEREQEKEREREKEREREL). The residue at position 433 (Thr433) is a Phosphothreonine. Over residues 450 to 465 (PVQHPLHPVPTPHHTV) the composition is skewed to low complexity. Position 496 is an N6-acetyllysine (Lys496). Disordered stretches follow at residues 526–579 (HLDM…QLHA), 633–675 (KAEE…GPFL), and 699–720 (FGEL…PRAP). 2 stretches are compositionally biased toward basic and acidic residues: residues 551 to 561 (NRHEPGGRDPP) and 633 to 645 (KAEE…EPAP). Over residues 711 to 720 (PYRPPVPRAP) the composition is skewed to pro residues. The residue at position 739 (Lys739) is an N6-acetyllysine. Residue Ser766 is modified to Phosphoserine. Disordered stretches follow at residues 807 to 858 (KEEL…NNSP), 903 to 930 (ADSL…SLDV), 948 to 981 (EPGK…EAPG), and 1068 to 1122 (LQSS…PKRK). The span at 813 to 822 (QKRRKRRRML) shows a compositional bias: basic residues. A phosphoserine mark is found at Ser826 and Ser828. Composition is skewed to polar residues over residues 831–840 (TIQSKRQTPS) and 847–858 (TRYSPDEMNNSP). Residue Ser857 is modified to Phosphoserine. Residue Thr907 is modified to Phosphothreonine. Ser909 is modified (phosphoserine). Residues 1068–1085 (LQSSSRAPPPQHNGQQEP) are compositionally biased toward polar residues. Over residues 1099–1117 (RDSEEEEEEDDEDGEDEEE) the composition is skewed to acidic residues. Ser1101 carries the post-translational modification Phosphoserine. Positions 1127–1201 (EAVFEAYQEH…ELDHLRKCLA (75 aa)) form a coiled coil.

May be a component of a BHC histone deacetylase complex that contains HDAC1, HDAC2, HMG20B/BRAF35, KDM1A, RCOR1/CoREST, PHF21A/BHC80, ZMYM2, ZNF217, ZMYM3, GSE1 and GTF2I.

The chain is Genetic suppressor element 1 (GSE1) from Homo sapiens (Human).